The following is an 84-amino-acid chain: U8-theraphotoxin-Hhn1d (84 aa).

Residues 1-21 (MKVVLIVCLVWVMAMMELVSC) form the signal peptide. Disulfide bonds link Cys23/Cys35, Cys29/Cys44, Cys34/Cys67, Cys54/Cys75, and Cys69/Cys81.

It belongs to the AVIT (prokineticin) family. Expressed by the venom gland.

It is found in the secreted. The polypeptide is U8-theraphotoxin-Hhn1d (Cyriopagopus hainanus (Chinese bird spider)).